A 396-amino-acid polypeptide reads, in one-letter code: MQDSSLNNYANHKNFILMLIILFLMEFARGMYILSYINFLPTVTSIAVAITSLAFSIHFIADASTNFVIGFLLKKFGTKIVLTTGFILAFTSLFLVIWFPASPFVIIFSAMMLGIAVSPIWVIMLSSVEEDKRGKQMGYVYFSWLLGLLVGMVFMNLLIKVHPTRFAFMMSLVVLIAWILYYFVDVKLTNYNTRPVKAQLRQIVDVTKRHLLLFPGILLQGAAIAALVPILPTYATKVINVSTIEYTVAIIIGGIGCAVSMLFLSKLIDNRSRNFMYGVILSGFILYMILIFTLSMIVNIHILWIIALAIGLMYGILLPAWNTFMARFIKSDEQEETWGVFNSIQGFGSMIGPLFGGLITQFTNNLNNTFYFSALIFLVLAVFYGSYFIVNREKAK.

Transmembrane regions (helical) follow at residues 15 to 34, 46 to 73, 80 to 99, 105 to 126, 138 to 159, 165 to 184, 211 to 231, 243 to 263, 275 to 297, 303 to 326, 338 to 358, and 370 to 390; these read FILMLIILFLMEFARGMYIL, IAVAITSLAFSIHFIADASTNFVIGFLL, IVLTTGFILAFTSLFLVIWF, VIIFSAMMLGIAVSPIWVIMLS, GYVYFSWLLGLLVGMVFMNLLI, RFAFMMSLVVLIAWILYYFV, LLLFPGILLQGAAIAALVPIL, TIEYTVAIIIGGIGCAVSMLF, FMYGVILSGFILYMILIFTLSMI, LWIIALAIGLMYGILLPAWNTFMA, WGVFNSIQGFGSMIGPLFGGL, and FYFSALIFLVLAVFYGSYFIV.

Belongs to the major facilitator superfamily. LtaA family.

It is found in the cell membrane. It participates in cell wall biogenesis; lipoteichoic acid biosynthesis. Functionally, proton-coupled antiporter flippase that catalyzes the translocation, from the inner to the outer leaflet of the cell membrane, of the lipid-linked disaccharide (anchor-LLD) that anchors lipoteichoic acids (LTA) to the cell membrane. This chain is Proton-coupled antiporter flippase LtaA (ltaA), found in Staphylococcus aureus (strain USA300).